A 147-amino-acid chain; its full sequence is uncharacterized protein (147 aa).

To M.jannaschii MJ0215.

This is an uncharacterized protein from Methanocaldococcus jannaschii (strain ATCC 43067 / DSM 2661 / JAL-1 / JCM 10045 / NBRC 100440) (Methanococcus jannaschii).